The sequence spans 507 residues: Prolyl carboxy peptidase like protein 5 (507 aa).

A signal peptide spans 1–16 (MNIFISLAILIATTHC). N-linked (GlcNAc...) asparagine glycosylation occurs at N125. S172 serves as the catalytic Charge relay system. N332 and N407 each carry an N-linked (GlcNAc...) asparagine glycan. Residues D439 and H466 each act as charge relay system in the active site.

This sequence belongs to the peptidase S28 family.

This Caenorhabditis elegans protein is Prolyl carboxy peptidase like protein 5.